The following is a 147-amino-acid chain: Nucleoside diphosphate kinase (147 aa).

ATP is bound by residues Lys9, Phe57, Arg85, Thr91, Arg102, and Asn112. The Pros-phosphohistidine intermediate role is filled by His115.

This sequence belongs to the NDK family. The cofactor is Mg(2+).

The protein resides in the cytoplasm. It carries out the reaction a 2'-deoxyribonucleoside 5'-diphosphate + ATP = a 2'-deoxyribonucleoside 5'-triphosphate + ADP. It catalyses the reaction a ribonucleoside 5'-diphosphate + ATP = a ribonucleoside 5'-triphosphate + ADP. Functionally, major role in the synthesis of nucleoside triphosphates other than ATP. The ATP gamma phosphate is transferred to the NDP beta phosphate via a ping-pong mechanism, using a phosphorylated active-site intermediate. The chain is Nucleoside diphosphate kinase from Ignicoccus hospitalis (strain KIN4/I / DSM 18386 / JCM 14125).